The sequence spans 117 residues: Hainantoxin-XV (117 aa).

The signal sequence occupies residues 1–20 (MKLCAVIIASLLVCVAVASS). The tract at residues 20–55 (SSDNQKEFAQEKEMTREETQSLGEHEKDDEVTGSEE) is disordered. The propeptide occupies 21 to 56 (SDNQKEFAQEKEMTREETQSLGEHEKDDEVTGSEER). Positions 23 to 55 (NQKEFAQEKEMTREETQSLGEHEKDDEVTGSEE) are enriched in basic and acidic residues. Disulfide bonds link cysteine 58/cysteine 72, cysteine 65/cysteine 78, cysteine 69/cysteine 115, and cysteine 71/cysteine 91.

The protein belongs to the neurotoxin 03 (Tx2) family. 02 subfamily. HNTX-XV sub-subfamily. Expressed by the venom gland.

It localises to the secreted. Functionally, putative ion channel inhibitor. The chain is Hainantoxin-XV from Cyriopagopus hainanus (Chinese bird spider).